We begin with the raw amino-acid sequence, 128 residues long: UPF0325 protein KPN78578_01770 (128 aa).

This sequence belongs to the UPF0325 family.

The polypeptide is UPF0325 protein KPN78578_01770 (Klebsiella pneumoniae subsp. pneumoniae (strain ATCC 700721 / MGH 78578)).